Reading from the N-terminus, the 64-residue chain is Large ribosomal subunit protein bL32 (64 aa).

Positions 1 to 36 (MAVQKSRVTPSRRGQRRSHDALSAKQLSTDPTTGEV) are disordered.

It belongs to the bacterial ribosomal protein bL32 family.

The polypeptide is Large ribosomal subunit protein bL32 (Stenotrophomonas maltophilia (strain K279a)).